The sequence spans 273 residues: 4-hydroxy-tetrahydrodipicolinate reductase (273 aa).

NAD(+)-binding positions include 12–17 and glutamate 38; that span reads GAGGRM. Arginine 39 contributes to the NADP(+) binding site. Residues 102-104 and 126-129 contribute to the NAD(+) site; these read GTT and AANF. Catalysis depends on histidine 159, which acts as the Proton donor/acceptor. Position 160 (histidine 160) interacts with (S)-2,3,4,5-tetrahydrodipicolinate. Lysine 163 serves as the catalytic Proton donor. 169-170 provides a ligand contact to (S)-2,3,4,5-tetrahydrodipicolinate; it reads GT.

Belongs to the DapB family. As to quaternary structure, homotetramer.

The protein resides in the cytoplasm. It carries out the reaction (S)-2,3,4,5-tetrahydrodipicolinate + NAD(+) + H2O = (2S,4S)-4-hydroxy-2,3,4,5-tetrahydrodipicolinate + NADH + H(+). The catalysed reaction is (S)-2,3,4,5-tetrahydrodipicolinate + NADP(+) + H2O = (2S,4S)-4-hydroxy-2,3,4,5-tetrahydrodipicolinate + NADPH + H(+). The protein operates within amino-acid biosynthesis; L-lysine biosynthesis via DAP pathway; (S)-tetrahydrodipicolinate from L-aspartate: step 4/4. Its function is as follows. Catalyzes the conversion of 4-hydroxy-tetrahydrodipicolinate (HTPA) to tetrahydrodipicolinate. The chain is 4-hydroxy-tetrahydrodipicolinate reductase from Proteus mirabilis (strain HI4320).